The primary structure comprises 273 residues: Thiazole synthase (273 aa).

The active-site Schiff-base intermediate with DXP is the Lys-111. Residues Gly-172, 198-199, and 220-221 contribute to the 1-deoxy-D-xylulose 5-phosphate site; these read AG and NS. The segment at 251 to 273 is disordered; it reads RLPRRGQASASSPTTGLISGKDK. Residues 258–267 are compositionally biased toward polar residues; it reads ASASSPTTGL.

The protein belongs to the ThiG family. In terms of assembly, homotetramer. Forms heterodimers with either ThiH or ThiS.

Its subcellular location is the cytoplasm. It catalyses the reaction [ThiS sulfur-carrier protein]-C-terminal-Gly-aminoethanethioate + 2-iminoacetate + 1-deoxy-D-xylulose 5-phosphate = [ThiS sulfur-carrier protein]-C-terminal Gly-Gly + 2-[(2R,5Z)-2-carboxy-4-methylthiazol-5(2H)-ylidene]ethyl phosphate + 2 H2O + H(+). It functions in the pathway cofactor biosynthesis; thiamine diphosphate biosynthesis. Its function is as follows. Catalyzes the rearrangement of 1-deoxy-D-xylulose 5-phosphate (DXP) to produce the thiazole phosphate moiety of thiamine. Sulfur is provided by the thiocarboxylate moiety of the carrier protein ThiS. In vitro, sulfur can be provided by H(2)S. The polypeptide is Thiazole synthase (Synechococcus sp. (strain CC9902)).